We begin with the raw amino-acid sequence, 1745 residues long: ADAMTS-like protein 1 (1745 aa).

The first 28 residues, 1–28, serve as a signal peptide directing secretion; that stretch reads MECCRRAAPGTPLLVLAFLLLSSRTARS. The 50-residue stretch at 33-82 folds into the TSP type-1 1 domain; sequence EGLWDAWGPWSECSRTCGGGASYSLRRCLSSKSCEGRNIRYRTCSNVDCP. 3 disulfide bridges follow: cysteine 45-cysteine 76, cysteine 49-cysteine 81, and cysteine 60-cysteine 66. An N-linked (GlcNAc...) asparagine glycan is attached at asparagine 251. Residues serine 310 and serine 391 are each glycosylated (O-linked (Fuc...) serine). 6 consecutive TSP type-1 domains span residues 376 to 424, 436 to 493, 522 to 584, 607 to 667, 703 to 762, and 763 to 825; these read PLPR…MYTP, DCPK…TPCY, EEPS…GPCN, ELYD…DPCP, CPPA…KKDD, and CPSE…ATCA. Threonine 451 carries an O-linked (Fuc...) threonine glycan. 3 cysteine pairs are disulfide-bonded: cysteine 534-cysteine 578, cysteine 538-cysteine 583, and cysteine 549-cysteine 567. Disulfide bonds link cysteine 775/cysteine 819, cysteine 779/cysteine 824, cysteine 790/cysteine 807, and cysteine 874/cysteine 922. The Ig-like C2-type 1 domain maps to 836–938; it reads PHIAAARNIY…EQFVIKLIGG (103 aa). 2 disordered regions span residues 966–991 and 1114–1137; these read EALQ…GLTA and VSGF…RPHR. Residues 1115–1126 are compositionally biased toward low complexity; the sequence is SGFSSSLRSSSG. Ig-like C2-type domains lie at 1139–1241, 1261–1352, and 1378–1468; these read PAIL…IAVT, PTVT…TQLL, and PSVL…ASLV. Intrachain disulfides connect cysteine 1177-cysteine 1225, cysteine 1283-cysteine 1336, and cysteine 1401-cysteine 1452. TSP type-1 domains lie at 1528–1591 and 1649–1709; these read CPSR…QLCV and CSVH…TPCE. Residues 1709 to 1745 enclose the PLAC domain; sequence ENTECRDTTRYCEKVRQLKLCQLGQFRSRCCGTCGKA.

Monomer. Glycosylated. O-fucosylated by POFUT2 on a serine or a threonine residue found within the consensus sequence C1-X(2)-(S/T)-C2-G of the TSP type-1 repeat domains where C1 and C2 are the first and second cysteine residue of the repeat, respectively. Fucosylated repeats can then be further glycosylated by the addition of a beta-1,3-glucose residue by the glucosyltransferase, B3GALTL. Fucosylation mediates the efficient secretion of ADAMTS family members. Can also be C-glycosylated with one or two mannose molecules on tryptophan residues within the consensus sequence W-X-X-W of the TPRs, and N-glycosylated. These other glycosylations can also facilitate secretion. Post-translationally, disulfide bonds are present.

The protein resides in the secreted. It localises to the extracellular space. It is found in the extracellular matrix. In Mus musculus (Mouse), this protein is ADAMTS-like protein 1 (Adamtsl1).